The primary structure comprises 259 residues: UPF0246 protein MADE_1015435 (259 aa).

It belongs to the UPF0246 family.

The sequence is that of UPF0246 protein MADE_1015435 from Alteromonas mediterranea (strain DSM 17117 / CIP 110805 / LMG 28347 / Deep ecotype).